Consider the following 877-residue polypeptide: Neurotrypsin (877 aa).

Residues 1-20 (MTLARFVLALVLGALPEVVS) form the signal peptide. N-linked (GlcNAc...) asparagine glycosylation is present at Asn26. Positions 31–90 (HRHRHRHSPPPGLQYPYYLPTQQRPPRTRPPPPLPRFPRPPRALPAQRPHALQAGHTPRP) are disordered. Residues 44 to 55 (QYPYYLPTQQRP) show a composition bias toward low complexity. A compositionally biased stretch (pro residues) spans 58 to 73 (TRPPPPLPRFPRPPRA). Residues 95–167 (CPAGEPWVSV…GKVDWGYCDC (73 aa)) enclose the Kringle domain. Intrachain disulfides connect Cys95/Cys167, Cys111/Cys151, Cys140/Cys165, Cys197/Cys261, Cys210/Cys271, Cys241/Cys251, Cys307/Cys371, Cys320/Cys381, Cys351/Cys361, Cys414/Cys477, Cys427/Cys487, Cys457/Cys467, Cys527/Cys591, Cys540/Cys601, Cys571/Cys581, Cys621/Cys752, Cys663/Cys679, Cys767/Cys833, Cys796/Cys810, and Cys823/Cys852. SRCR domains are found at residues 172-273 (VRLR…TCSF), 282-383 (IRLV…SCTP), 389-489 (IRLA…ACYP), and 502-603 (VRLM…ICDY). The interval 621 to 632 (CGLRLLHRRQKR) is zymogen activation region. One can recognise a Peptidase S1 domain in the interval 633-876 (IIGGKNSLRG…FVPWIKSVTK (244 aa)). The Charge relay system role is filled by His678. Asn685 is a glycosylation site (N-linked (GlcNAc...) asparagine). Asp728 serves as the catalytic Charge relay system. Catalysis depends on Ser827, which acts as the Charge relay system.

This sequence belongs to the peptidase S1 family.

Its subcellular location is the secreted. Plays a role in neuronal plasticity and the proteolytic action may subserve structural reorganizations associated with learning and memory operations. The protein is Neurotrypsin (PRSS12) of Pongo pygmaeus (Bornean orangutan).